Consider the following 524-residue polypeptide: Bifunctional purine biosynthesis protein PurH (524 aa).

Residues 1-149 enclose the MGS-like domain; sequence MSDPVIKRAL…KNNESVTVVT (149 aa).

Belongs to the PurH family.

It carries out the reaction (6R)-10-formyltetrahydrofolate + 5-amino-1-(5-phospho-beta-D-ribosyl)imidazole-4-carboxamide = 5-formamido-1-(5-phospho-D-ribosyl)imidazole-4-carboxamide + (6S)-5,6,7,8-tetrahydrofolate. The catalysed reaction is IMP + H2O = 5-formamido-1-(5-phospho-D-ribosyl)imidazole-4-carboxamide. It functions in the pathway purine metabolism; IMP biosynthesis via de novo pathway; 5-formamido-1-(5-phospho-D-ribosyl)imidazole-4-carboxamide from 5-amino-1-(5-phospho-D-ribosyl)imidazole-4-carboxamide (10-formyl THF route): step 1/1. It participates in purine metabolism; IMP biosynthesis via de novo pathway; IMP from 5-formamido-1-(5-phospho-D-ribosyl)imidazole-4-carboxamide: step 1/1. This Chlorobium chlorochromatii (strain CaD3) protein is Bifunctional purine biosynthesis protein PurH.